The sequence spans 342 residues: Ketol-acid reductoisomerase (NADP(+)) (342 aa).

In terms of domain architecture, KARI N-terminal Rossmann spans 2–182 (AEIYYDNDAD…GGLRAGGIKT (181 aa)). NADP(+)-binding positions include 25-28 (YGSQ), lysine 48, serine 51, serine 53, and 83-86 (DQVQ). The active site involves histidine 108. Position 134 (glycine 134) interacts with NADP(+). Residues 183 to 328 (TFTEETETDL…RELRKLFAWN (146 aa)) form the KARI C-terminal knotted domain. Mg(2+)-binding residues include aspartate 191, glutamate 195, glutamate 227, and glutamate 231. Residue serine 252 participates in substrate binding.

It belongs to the ketol-acid reductoisomerase family. Mg(2+) is required as a cofactor.

It carries out the reaction (2R)-2,3-dihydroxy-3-methylbutanoate + NADP(+) = (2S)-2-acetolactate + NADPH + H(+). The catalysed reaction is (2R,3R)-2,3-dihydroxy-3-methylpentanoate + NADP(+) = (S)-2-ethyl-2-hydroxy-3-oxobutanoate + NADPH + H(+). It participates in amino-acid biosynthesis; L-isoleucine biosynthesis; L-isoleucine from 2-oxobutanoate: step 2/4. The protein operates within amino-acid biosynthesis; L-valine biosynthesis; L-valine from pyruvate: step 2/4. Its function is as follows. Involved in the biosynthesis of branched-chain amino acids (BCAA). Catalyzes an alkyl-migration followed by a ketol-acid reduction of (S)-2-acetolactate (S2AL) to yield (R)-2,3-dihydroxy-isovalerate. In the isomerase reaction, S2AL is rearranged via a Mg-dependent methyl migration to produce 3-hydroxy-3-methyl-2-ketobutyrate (HMKB). In the reductase reaction, this 2-ketoacid undergoes a metal-dependent reduction by NADPH to yield (R)-2,3-dihydroxy-isovalerate. The protein is Ketol-acid reductoisomerase (NADP(+)) of Leifsonia xyli subsp. xyli (strain CTCB07).